The following is a 34-amino-acid chain: NU-buthitoxin-Ptr1a (34 aa).

3 disulfides stabilise this stretch: cysteine 6–cysteine 27, cysteine 12–cysteine 32, and cysteine 16–cysteine 34.

In terms of tissue distribution, expressed by the venom gland.

It is found in the secreted. Toxin that acts as an agonist on melanocortin receptors (MC1R, MC3R, MC5R, MC5R). After binding to MC1R, the peptide activates the hMC1R/Gs pathway, but after binding to MC4R, it is not able to activate or antagonize the MC4R/Gs pathway. Inhibits melanocyte stimulating hormone (MSH)-binding to human receptors (Ki=2.9 uM to MC1R, Ki=3.9 uM to MC3R, Ki=2.6 uM to MC4R, Ki=2.2 uM to MC5R). This toxin is structurally unrelated to the natural agonists. This chain is NU-buthitoxin-Ptr1a, found in Parabuthus transvaalicus (Transvaal thick-tailed scorpion).